Here is a 582-residue protein sequence, read N- to C-terminus: Formate--tetrahydrofolate ligase (582 aa).

65–72 (TPLGEGKT) is an ATP binding site.

Belongs to the formate--tetrahydrofolate ligase family.

The enzyme catalyses (6S)-5,6,7,8-tetrahydrofolate + formate + ATP = (6R)-10-formyltetrahydrofolate + ADP + phosphate. It functions in the pathway one-carbon metabolism; tetrahydrofolate interconversion. In Vibrio parahaemolyticus serotype O3:K6 (strain RIMD 2210633), this protein is Formate--tetrahydrofolate ligase.